Reading from the N-terminus, the 123-residue chain is Methanesulfonate monooxygenase ferredoxin subunit (123 aa).

The Rieske domain occupies 4–99; it reads TYLCDAADVA…LKEEDGKLLA (96 aa). The [2Fe-2S] cluster site is built by Cys43, His45, Cys63, and His66.

This sequence belongs to the bacterial ring-hydroxylating dioxygenase ferredoxin component family. In terms of assembly, the MSA monooxygenase system consists of 4 proteins: the 2 subunits of the hydroxylase component (MsmA and MsmB), a ferredoxin (MsmC) and a ferredoxin reductase (MsmD). The ferredoxin component is dimeric. Requires [2Fe-2S] cluster as cofactor.

Its subcellular location is the cytoplasm. It catalyses the reaction methanesulfonate + NADH + O2 = sulfite + formaldehyde + NAD(+) + H2O. With respect to regulation, MSAMO is inhibited by metal chelators (such as bathophenanthroline, bathocuprione, neocuprione, alpha-alpha-dipyridil and sodium EDTA) and by sodium azide, sodium arsenate and potassium cyanide. Functionally, methanesulfonate monooxygenase (MSAMO) mediates the primary degradation of methanesulfonic acid (MSA) to produce formaldehyd and inorganic sulfite by initial hydroxylation of the carbon atom prior to spontaneous cleavage of the unstable hydroxymethanesulfonic acid. MSAMO has a restricted substrate range that includes only the short-chain aliphatic sulfonates (methane- to butanesulfonate) and excludes all larger molecules, such as arylsulfonates and aromatic sulfonates. All MSAMO components are required for enzyme activity. This is Methanesulfonate monooxygenase ferredoxin subunit from Methylosulfonomonas methylovora.